The following is a 61-amino-acid chain: Small ribosomal subunit protein uS14 (61 aa).

Zn(2+) is bound by residues cysteine 24, cysteine 27, cysteine 40, and cysteine 43.

The protein belongs to the universal ribosomal protein uS14 family. Zinc-binding uS14 subfamily. As to quaternary structure, part of the 30S ribosomal subunit. Contacts proteins S3 and S10. It depends on Zn(2+) as a cofactor.

Binds 16S rRNA, required for the assembly of 30S particles and may also be responsible for determining the conformation of the 16S rRNA at the A site. The protein is Small ribosomal subunit protein uS14 of Nitratidesulfovibrio vulgaris (strain ATCC 29579 / DSM 644 / CCUG 34227 / NCIMB 8303 / VKM B-1760 / Hildenborough) (Desulfovibrio vulgaris).